The primary structure comprises 239 residues: Serine protease SplF (239 aa).

A signal peptide spans 1–36; sequence MNKNIIIKSIGALTILTSITGVGTTMVEGIQQTAKA. Residues histidine 75, aspartate 114, and serine 192 each act as charge relay system in the active site.

It belongs to the peptidase S1B family.

It is found in the secreted. The sequence is that of Serine protease SplF (splF) from Staphylococcus aureus (strain USA300).